The chain runs to 52 residues: Alpha-1-antiproteinase 3 (52 aa).

Residues 1–20 form a disordered region; it reads EDLQGDAVPEEXATKDDNEH.

It belongs to the serpin family. In terms of processing, N-glycosylated; contains glycans with bi- and triantennary side chains. As to expression, plasma.

The protein resides in the secreted. This is Alpha-1-antiproteinase 3 from Equus caballus (Horse).